The chain runs to 383 residues: uncharacterized protein (383 aa).

Residues 58–383 (GKGATRTQAR…RVGRRIRSSI (326 aa)) form the YcaO domain. The interval 80–100 (AERKPEDETFTAHPEDCDGLD) is disordered.

This is an uncharacterized protein from Methanothermobacter thermautotrophicus (strain ATCC 29096 / DSM 1053 / JCM 10044 / NBRC 100330 / Delta H) (Methanobacterium thermoautotrophicum).